A 138-amino-acid polypeptide reads, in one-letter code: Nucleoside diphosphate kinase (138 aa).

Positions 12, 60, 88, 94, 105, and 115 each coordinate ATP. H118 serves as the catalytic Pros-phosphohistidine intermediate.

The protein belongs to the NDK family. As to quaternary structure, homotetramer. Mg(2+) is required as a cofactor.

It is found in the cytoplasm. It catalyses the reaction a 2'-deoxyribonucleoside 5'-diphosphate + ATP = a 2'-deoxyribonucleoside 5'-triphosphate + ADP. It carries out the reaction a ribonucleoside 5'-diphosphate + ATP = a ribonucleoside 5'-triphosphate + ADP. Major role in the synthesis of nucleoside triphosphates other than ATP. The ATP gamma phosphate is transferred to the NDP beta phosphate via a ping-pong mechanism, using a phosphorylated active-site intermediate. The polypeptide is Nucleoside diphosphate kinase (Cutibacterium acnes (strain DSM 16379 / KPA171202) (Propionibacterium acnes)).